The following is a 193-amino-acid chain: Ion-translocating oxidoreductase complex subunit A (193 aa).

6 consecutive transmembrane segments (helical) span residues 5-25 (LLLF…FLGL), 47-67 (FVMT…LIPL), 72-92 (LRTL…EMVV), 102-122 (LLGI…VALL), 134-154 (ALYG…FAAI), and 171-191 (AIAL…SGLV).

Belongs to the NqrDE/RnfAE family. As to quaternary structure, the complex is composed of six subunits: RsxA, RsxB, RsxC, RsxD, RsxE and RsxG.

Its subcellular location is the cell inner membrane. Part of a membrane-bound complex that couples electron transfer with translocation of ions across the membrane. Required to maintain the reduced state of SoxR. The protein is Ion-translocating oxidoreductase complex subunit A of Salmonella arizonae (strain ATCC BAA-731 / CDC346-86 / RSK2980).